The sequence spans 272 residues: Cell division protein DivIB (272 aa).

The Cytoplasmic portion of the chain corresponds to 1–21 (MRLSSHGKKTVSTSNNPVFNR). Residues 22–42 (IGLFFTAAILFALFLQMLFFL) traverse the membrane as a helical segment. Positions 43–115 (RPWQDIKETK…GTAIIRVNEN (73 aa)) constitute a POTRA domain. Residues 43-272 (RPWQDIKETK…SSSKSSNSSK (230 aa)) are Extracellular-facing. Positions 253-272 (LSSLSSDKSKSSSKSSNSSK) are disordered.

Belongs to the FtsQ/DivIB family. DivIB subfamily.

Its subcellular location is the cell membrane. Functionally, cell division protein that may be involved in stabilizing or promoting the assembly of the division complex. This Oenococcus oeni (strain ATCC BAA-331 / PSU-1) protein is Cell division protein DivIB.